A 635-amino-acid polypeptide reads, in one-letter code: Threonine--tRNA ligase (635 aa).

The segment at 1 to 152 (MQLLLIHSDY…AKAAVKPEAA (152 aa)) is editing domain. A catalytic region spans residues 215–514 (PHVELMRRLE…TEEGKVPMLP (300 aa)). Zn(2+)-binding residues include C307, H359, and H483.

Belongs to the class-II aminoacyl-tRNA synthetase family. In terms of assembly, homodimer. Requires Zn(2+) as cofactor.

The protein localises to the cytoplasm. The catalysed reaction is tRNA(Thr) + L-threonine + ATP = L-threonyl-tRNA(Thr) + AMP + diphosphate + H(+). In terms of biological role, catalyzes the attachment of threonine to tRNA(Thr) in a two-step reaction: L-threonine is first activated by ATP to form Thr-AMP and then transferred to the acceptor end of tRNA(Thr). Also edits incorrectly charged L-seryl-tRNA(Thr). The sequence is that of Threonine--tRNA ligase from Methanosarcina acetivorans (strain ATCC 35395 / DSM 2834 / JCM 12185 / C2A).